Here is a 499-residue protein sequence, read N- to C-terminus: Chitinase B (499 aa).

The signal sequence occupies residues 1–41; it reads MSTRKAVIGYYFIPTNQINNYTETDTSVVPFPVSNITPAKA. The region spanning 42–425 is the GH18 domain; sequence KQLTHINFSF…AALDRYFNAA (384 aa). Chitin-binding positions include 68–69 and 95–98; these read DA and GGWY. E144 functions as the Proton donor in the catalytic mechanism. Chitin-binding positions include Y145, 212 to 215, and W403; that span reads MTYD. A Chitin-binding type-3 domain is found at 438 to 498; sequence LRYTGVGPGN…DSAWLKVGRL (61 aa).

This sequence belongs to the glycosyl hydrolase 18 family. Chitinase class II subfamily.

It carries out the reaction Random endo-hydrolysis of N-acetyl-beta-D-glucosaminide (1-&gt;4)-beta-linkages in chitin and chitodextrins.. The polypeptide is Chitinase B (chiB) (Serratia marcescens).